The following is a 98-amino-acid chain: MTSTNFRPLHDRVVVRRVESEAKTKGGIIIPDTAKEKPQEGEIVAVGSGARDEAGKVVALDVKVGDRVLFGKWSGTEVKLDGEDLLIMKEADIMGIIG.

This sequence belongs to the GroES chaperonin family. In terms of assembly, heptamer of 7 subunits arranged in a ring. Interacts with the chaperonin GroEL.

The protein resides in the cytoplasm. In terms of biological role, together with the chaperonin GroEL, plays an essential role in assisting protein folding. The GroEL-GroES system forms a nano-cage that allows encapsulation of the non-native substrate proteins and provides a physical environment optimized to promote and accelerate protein folding. GroES binds to the apical surface of the GroEL ring, thereby capping the opening of the GroEL channel. The polypeptide is Co-chaperonin GroES (Agrobacterium fabrum (strain C58 / ATCC 33970) (Agrobacterium tumefaciens (strain C58))).